Reading from the N-terminus, the 364-residue chain is Leucine dehydrogenase (364 aa).

K80 is a catalytic residue. An NAD(+)-binding site is contributed by 180 to 186 (GVGNVAY).

The protein belongs to the Glu/Leu/Phe/Val dehydrogenases family.

The catalysed reaction is L-leucine + NAD(+) + H2O = 4-methyl-2-oxopentanoate + NH4(+) + NADH + H(+). Its pathway is amino-acid degradation; L-leucine degradation; 4-methyl-2-oxopentanoate from L-leucine (dehydrogenase route): step 1/1. In terms of biological role, catalyzes the reversible deamination of L-leucine to 4-methyl-2-oxopentanoate. The chain is Leucine dehydrogenase (yqiT) from Bacillus subtilis (strain 168).